We begin with the raw amino-acid sequence, 349 residues long: Protein RAE1 (349 aa).

The interval 1 to 21 (MATFGAPATANSNPNKSYEVT) is disordered. An N-acetylalanine modification is found at Ala-2. Over residues 9-21 (TANSNPNKSYEVT) the composition is skewed to polar residues. WD repeat units follow at residues 23–62 (SPAD…ASLA), 70–109 (SHDQ…QPVT), 112–151 (MHEG…PVHT), 153–190 (QLPD…TEFK), and 244–283 (NDIY…RLKA). A DWD box motif is present at residues 128-144 (LLATGSWDKTLKYWDTR).

The protein belongs to the WD repeat rae1 family. Part of the nuclear pore complex (NPC). The NPC has an eight-fold symmetrical structure comprising a central transport channel and two rings, the cytoplasmic and nuclear rings, to which eight filaments are attached. The cytoplasmic filaments have loose ends, while the nuclear filaments are joined in a distal ring, forming a nuclear basket. NPCs are highly dynamic in configuration and composition, and can be devided in 3 subcomplexes, the NUP62 subcomplex, the NUP107-160 subcomplex and the NUP93 subcomplex, containing approximately 30 different nucleoporin proteins. Interacts with DDB1A.

The protein localises to the nucleus envelope. It is found in the nucleus. It localises to the nuclear pore complex. This Arabidopsis thaliana (Mouse-ear cress) protein is Protein RAE1.